The following is a 141-amino-acid chain: Protein archease (141 aa).

Ca(2+) is bound by residues aspartate 19 and aspartate 140.

The protein belongs to the archease family.

In terms of biological role, activates the tRNA-splicing ligase complex by facilitating the enzymatic turnover of catalytic subunit RtcB. Acts by promoting the guanylylation of RtcB, a key intermediate step in tRNA ligation. Can also alter the NTP specificity of RtcB such that ATP, dGTP or ITP is used efficiently. This chain is Protein archease, found in Thermoplasma acidophilum (strain ATCC 25905 / DSM 1728 / JCM 9062 / NBRC 15155 / AMRC-C165).